We begin with the raw amino-acid sequence, 250 residues long: PF03932 family protein CutC (250 aa).

The protein belongs to the CutC family.

The protein localises to the cytoplasm. The polypeptide is PF03932 family protein CutC (Vibrio vulnificus (strain YJ016)).